The chain runs to 968 residues: Insulin receptor substrate 1 (968 aa).

A PH domain is found at 8-109 (GMALSGYLKK…WLDKLLVLQR (102 aa)). In terms of domain architecture, IRS-type PTB spans 122-236 (YDHVWQVVIQ…SAMSAKTESN (115 aa)). The disordered stretch occupies residues 248 to 269 (DLSHEPMRKRSSSANEASKPIN). Phosphoserine is present on residues S286 and S287. Positions 304 to 329 (RNGTLSESSNQTYFGSNHGLRSNTIS) are enriched in polar residues. Residues 304–370 (RNGTLSESSN…VDESDDNGSF (67 aa)) are disordered. The residue at position 342 (S342) is a Phosphoserine. Y411 carries the phosphotyrosine; by INSR modification. The YXXM motif 1 signature appears at 411 to 414 (YIPM). Residues 528–555 (TANRSQSSITKEGTSYGSSANRQKKSTS) form a disordered region. Positions 529–555 (ANRSQSSITKEGTSYGSSANRQKKSTS) are enriched in polar residues. A Phosphoserine modification is found at S555. Residues 641–644 (YLEM) carry the YXXM motif 2 motif. A compositionally biased stretch (basic and acidic residues) spans 697 to 711 (EKWREQPSRSEEKKS). The segment at 697-739 (EKWREQPSRSEEKKSNSPLNDNTFSSKPTNVESTSKSHDVHSA) is disordered. The span at 712 to 730 (NSPLNDNTFSSKPTNVEST) shows a compositional bias: polar residues. A Phosphotyrosine; by INSR modification is found at Y911. Residues 922-968 (QNPAKYLKRGSRESPPVSACPEDGNTYAKIDFDQSDSSSSSSNIFNT) form a disordered region. A phosphoserine mark is found at S932 and S935. Y948 bears the Phosphotyrosine; by INSR mark. Positions 956 to 968 (SDSSSSSSNIFNT) are enriched in low complexity.

In terms of assembly, bindings to phosphatidylinositol 3-kinase and SHP2.

Its function is as follows. Activates phosphatidylinositol 3-kinase when bound to the regulatory p85 subunit. May mediate the control of various cellular processes by insulin-like peptides. When phosphorylated by the insulin receptor binds specifically to various cellular proteins containing SH2 domains. Involved in control of cell proliferation, cell size, and body and organ growth throughout development. Also has a role in a signaling pathway controlling the physiological response required to endure periods of low nutrient conditions. Insulin/insulin-like growth factor (IGF) signaling pathway has a role in regulating aging and is necessary in the ovary for vitellogenic maturation. The polypeptide is Insulin receptor substrate 1 (chico) (Drosophila melanogaster (Fruit fly)).